The sequence spans 269 residues: Endo-1,3-1,4-beta-glycanase ExoK (269 aa).

Residues 1 to 29 (MTIDRYRRFARLAFIATLPLAGLATAAAA) form the signal peptide. In terms of domain architecture, GH16 spans 40–252 (DDFDTLDTRV…RVAFTAAGDE (213 aa)). Glutamate 138 (nucleophile) is an active-site residue. Glutamate 142 acts as the Proton donor in catalysis.

The protein belongs to the glycosyl hydrolase 16 family.

It localises to the secreted. Its pathway is glycan metabolism; exopolysaccharide biosynthesis. Its function is as follows. Cleaves high molecular weight succinoglycan to yield LMW succinoglycan. Dynamically regulates the molecular weight distribution of succinoglycan by cleaving nascent succinoglycan only during a limited period after its synthesis, perhaps before it undergoes a time-dependent change in its conformation or aggregation state. In Rhizobium meliloti (strain 1021) (Ensifer meliloti), this protein is Endo-1,3-1,4-beta-glycanase ExoK (exoK).